The following is a 202-amino-acid chain: ATP-dependent Clp protease proteolytic subunit (202 aa).

Serine 101 (nucleophile) is an active-site residue. The active site involves histidine 126.

This sequence belongs to the peptidase S14 family. In terms of assembly, component of the chloroplastic Clp protease core complex.

The protein localises to the plastid. The protein resides in the chloroplast stroma. It carries out the reaction Hydrolysis of proteins to small peptides in the presence of ATP and magnesium. alpha-casein is the usual test substrate. In the absence of ATP, only oligopeptides shorter than five residues are hydrolyzed (such as succinyl-Leu-Tyr-|-NHMec, and Leu-Tyr-Leu-|-Tyr-Trp, in which cleavage of the -Tyr-|-Leu- and -Tyr-|-Trp bonds also occurs).. In terms of biological role, cleaves peptides in various proteins in a process that requires ATP hydrolysis. Has a chymotrypsin-like activity. Plays a major role in the degradation of misfolded proteins. The sequence is that of ATP-dependent Clp protease proteolytic subunit from Illicium oligandrum (Star anise).